We begin with the raw amino-acid sequence, 238 residues long: Ribonuclease 3 (238 aa).

Residues 8 to 135 (VAELERRIGY…LIAALYIDGG (128 aa)) enclose the RNase III domain. Mg(2+) is bound at residue glutamate 48. Aspartate 52 is an active-site residue. 2 residues coordinate Mg(2+): aspartate 121 and glutamate 124. Glutamate 124 is a catalytic residue. The DRBM domain occupies 161–230 (DPKTQLQEWV…AQCMLLKREG (70 aa)).

Belongs to the ribonuclease III family. In terms of assembly, homodimer. Mg(2+) serves as cofactor.

The protein localises to the cytoplasm. It carries out the reaction Endonucleolytic cleavage to 5'-phosphomonoester.. Its function is as follows. Digests double-stranded RNA. Involved in the processing of primary rRNA transcript to yield the immediate precursors to the large and small rRNAs (23S and 16S). Processes some mRNAs, and tRNAs when they are encoded in the rRNA operon. Processes pre-crRNA and tracrRNA of type II CRISPR loci if present in the organism. This chain is Ribonuclease 3, found in Phenylobacterium zucineum (strain HLK1).